A 30-amino-acid polypeptide reads, in one-letter code: GIPCAESCVYIPCTITALLGCSCKNKVCYN.

Positions 1–30 (GIPCAESCVYIPCTITALLGCSCKNKVCYN) form a cross-link, cyclopeptide (Gly-Asn). Disulfide bonds link cysteine 4/cysteine 21, cysteine 8/cysteine 23, and cysteine 13/cysteine 28.

Post-translationally, this is a cyclic peptide.

Its function is as follows. Probably participates in a plant defense mechanism. In Pombalia parviflora (Violetilla), this protein is Cyclotide hypa-A.